The following is a 321-amino-acid chain: Tetraacyldisaccharide 4'-kinase (321 aa).

54–61 serves as a coordination point for ATP; sequence SVGGTGKT.

The protein belongs to the LpxK family.

It catalyses the reaction a lipid A disaccharide + ATP = a lipid IVA + ADP + H(+). It participates in glycolipid biosynthesis; lipid IV(A) biosynthesis; lipid IV(A) from (3R)-3-hydroxytetradecanoyl-[acyl-carrier-protein] and UDP-N-acetyl-alpha-D-glucosamine: step 6/6. Transfers the gamma-phosphate of ATP to the 4'-position of a tetraacyldisaccharide 1-phosphate intermediate (termed DS-1-P) to form tetraacyldisaccharide 1,4'-bis-phosphate (lipid IVA). The sequence is that of Tetraacyldisaccharide 4'-kinase from Rickettsia bellii (strain OSU 85-389).